We begin with the raw amino-acid sequence, 130 residues long: Small ribosomal subunit protein uS9 (130 aa).

Belongs to the universal ribosomal protein uS9 family.

The protein is Small ribosomal subunit protein uS9 of Polaromonas naphthalenivorans (strain CJ2).